Here is a 218-residue protein sequence, read N- to C-terminus: Suppressor of silencing P0 (218 aa).

One can recognise an F-box-like domain in the interval 63–67 (LPLHL).

This sequence belongs to the polerovirus P0 protein family. As to quaternary structure, interacts (via F-box-like domain) with host AGO1; this interaction targets AGO1 for degradation, and thereby suppresses the silencing function of the latter. Interacts (via F-box-like domain) with host ASK1 and ASK2 (SKP proteins); these interactions are essential for viral pathogenicity. Part of a SCF P0 complex composed of P0 and the host proteins SKP and CUL1.

Suppressor of RNA-mediated gene silencing, also known as post-transcriptional gene silencing (PTGS), a mechanism of plant viral defense that limits the accumulation of viral RNAs. The P0 protein suppresses local PTGS using its F-box-like domain to mediate destabilization and degradation of the AGO1 protein. In Beet western yellows virus (isolate GB1) (BWYV), this protein is Suppressor of silencing P0.